The sequence spans 466 residues: Cysteine--tRNA ligase (466 aa).

C28 lines the Zn(2+) pocket. The 'HIGH' region signature appears at 30–40; the sequence is PTVYNFFHIGN. Zn(2+) is bound by residues C208, H233, and E237. Positions 265–269 match the 'KMSKS' region motif; that stretch reads KMSKS. K268 provides a ligand contact to ATP.

The protein belongs to the class-I aminoacyl-tRNA synthetase family. Monomer. The cofactor is Zn(2+).

It localises to the cytoplasm. The enzyme catalyses tRNA(Cys) + L-cysteine + ATP = L-cysteinyl-tRNA(Cys) + AMP + diphosphate. The protein is Cysteine--tRNA ligase of Clostridium perfringens (strain SM101 / Type A).